The sequence spans 378 residues: Opsin Rh4 (378 aa).

The Extracellular segment spans residues 1-53 (MEPLCNASEPPLRPEARSSGNGDLQFLGWNVPPDQIQYIPEHWLTQLEPPASM). A glycan (N-linked (GlcNAc...) asparagine) is linked at N6. The helical transmembrane segment at 54 to 78 (HYMLGVFYIFLFCASTVGNGMVIWI) threads the bilayer. Residues 79-90 (FSTSKSLRTPSN) are Cytoplasmic-facing. The chain crosses the membrane as a helical span at residues 91 to 111 (MFVLNLAVFDLIMCLKAPIFI). Over 112-127 (YNSFHRGFALGNTWCQ) the chain is Extracellular. C126 and C203 form a disulfide bridge. A helical transmembrane segment spans residues 128–148 (IFASIGSYSGIGAGMTNAAIG). Over 149–167 (YDRYNVITKPMNRNMTFTK) the chain is Cytoplasmic. A helical transmembrane segment spans residues 168–192 (AVIMNIIIWLYCTPWVVLPLTQFWD). At 193–216 (RFVPEGYLTSCSFDYLSDNFDTRL) the chain is on the extracellular side. Residues 217-244 (FVGTIFFFSFVCPTLMILYYYSQIVGHV) traverse the membrane as a helical segment. Residues 245–280 (FSHEKALREQAKKMNVESLRSNVDKSKETAEIRIAK) lie on the Cytoplasmic side of the membrane. The chain crosses the membrane as a helical span at residues 281-304 (AAITICFLFFVSWTPYGVMSLIGA). At 305–312 (FGDKSLLT) the chain is on the extracellular side. The helical transmembrane segment at 313 to 337 (PGATMIPACTCKLVACIDPFVYAIS) threads the bilayer. K324 carries the N6-(retinylidene)lysine modification. Over 338-378 (HPRYRLELQKRCPWLGVNEKSGEISSAQSTTTQEQQQTTAA) the chain is Cytoplasmic.

This sequence belongs to the G-protein coupled receptor 1 family. Opsin subfamily. In terms of processing, phosphorylated on some or all of the serine and threonine residues present in the C-terminal region.

It is found in the membrane. Its function is as follows. Visual pigments are the light-absorbing molecules that mediate vision. They consist of an apoprotein, opsin, covalently linked to cis-retinal. The polypeptide is Opsin Rh4 (Rh4) (Drosophila melanogaster (Fruit fly)).